The sequence spans 111 residues: Heavy metal-associated isoprenylated plant protein 10 (111 aa).

The HMA domain occupies Met-1–Val-68. Residues Val-68–Leu-111 form a disordered region. Cys-108 bears the Cysteine methyl ester mark. Cys-108 carries the S-farnesyl cysteine lipid modification. The propeptide at Ile-109–Leu-111 is removed in mature form.

It belongs to the HIPP family.

In terms of biological role, probable heavy-metal-binding protein. The polypeptide is Heavy metal-associated isoprenylated plant protein 10 (Arabidopsis thaliana (Mouse-ear cress)).